The sequence spans 130 residues: Small ribosomal subunit protein uS8 (130 aa).

This sequence belongs to the universal ribosomal protein uS8 family. As to quaternary structure, part of the 30S ribosomal subunit. Contacts proteins S5 and S12.

Its function is as follows. One of the primary rRNA binding proteins, it binds directly to 16S rRNA central domain where it helps coordinate assembly of the platform of the 30S subunit. The polypeptide is Small ribosomal subunit protein uS8 (Alcanivorax borkumensis (strain ATCC 700651 / DSM 11573 / NCIMB 13689 / SK2)).